The chain runs to 360 residues: Phospho-N-acetylmuramoyl-pentapeptide-transferase (360 aa).

Transmembrane regions (helical) follow at residues 25-45 (RAIL…PTLI), 73-93 (TMGG…WADL), 97-117 (YVWV…VDDY), 128-148 (LIAK…AVYL), 168-188 (VMPQ…VGTS), 199-219 (GLAI…AYVS), 236-256 (TAEL…FLWF), 262-282 (LVFM…IIAI), 288-308 (LVLF…MLQV), and 338-358 (VIVR…ATLK).

The protein belongs to the glycosyltransferase 4 family. MraY subfamily. The cofactor is Mg(2+).

The protein resides in the cell inner membrane. The catalysed reaction is UDP-N-acetyl-alpha-D-muramoyl-L-alanyl-gamma-D-glutamyl-meso-2,6-diaminopimeloyl-D-alanyl-D-alanine + di-trans,octa-cis-undecaprenyl phosphate = di-trans,octa-cis-undecaprenyl diphospho-N-acetyl-alpha-D-muramoyl-L-alanyl-D-glutamyl-meso-2,6-diaminopimeloyl-D-alanyl-D-alanine + UMP. Its pathway is cell wall biogenesis; peptidoglycan biosynthesis. Functionally, catalyzes the initial step of the lipid cycle reactions in the biosynthesis of the cell wall peptidoglycan: transfers peptidoglycan precursor phospho-MurNAc-pentapeptide from UDP-MurNAc-pentapeptide onto the lipid carrier undecaprenyl phosphate, yielding undecaprenyl-pyrophosphoryl-MurNAc-pentapeptide, known as lipid I. In Idiomarina loihiensis (strain ATCC BAA-735 / DSM 15497 / L2-TR), this protein is Phospho-N-acetylmuramoyl-pentapeptide-transferase.